Reading from the N-terminus, the 375-residue chain is Succinyl-diaminopimelate desuccinylase (375 aa).

His75 lines the Zn(2+) pocket. The active site involves Asp77. Zn(2+) is bound at residue Asp106. The active-site Proton acceptor is the Glu136. Zn(2+) contacts are provided by Glu137, Glu165, and His348.

The protein belongs to the peptidase M20A family. DapE subfamily. In terms of assembly, homodimer. It depends on Zn(2+) as a cofactor. The cofactor is Co(2+).

It carries out the reaction N-succinyl-(2S,6S)-2,6-diaminopimelate + H2O = (2S,6S)-2,6-diaminopimelate + succinate. It participates in amino-acid biosynthesis; L-lysine biosynthesis via DAP pathway; LL-2,6-diaminopimelate from (S)-tetrahydrodipicolinate (succinylase route): step 3/3. Catalyzes the hydrolysis of N-succinyl-L,L-diaminopimelic acid (SDAP), forming succinate and LL-2,6-diaminopimelate (DAP), an intermediate involved in the bacterial biosynthesis of lysine and meso-diaminopimelic acid, an essential component of bacterial cell walls. In Novosphingobium aromaticivorans (strain ATCC 700278 / DSM 12444 / CCUG 56034 / CIP 105152 / NBRC 16084 / F199), this protein is Succinyl-diaminopimelate desuccinylase.